A 452-amino-acid polypeptide reads, in one-letter code: Golgi reassembly-stacking protein 2 (452 aa).

Gly2 carries N-myristoyl glycine lipidation. PDZ GRASP-type domains lie at 15–105 and 111–199; these read EGYH…FCSF and NVWH…YGYL. The tract at residues 15-215 is GRASP; the sequence is EGYHVLRVQE…PFEEGKKISL (201 aa). 2 positions are modified to dimethylated arginine: Arg30 and Arg47. The tract at residues 194–199 is important for membrane binding; that stretch reads IGYGYL. Phosphoserine is present on Ser214. Phosphothreonine is present on residues Thr222 and Thr225. A compositionally biased stretch (low complexity) spans 372–424; the sequence is PESSSAASSGELLSSLPPTSNAPSDPATTTAKADAASSLTVDVTPPTAKAPTT. The interval 372 to 452 is disordered; sequence PESSSAASSG…AVDANASESP (81 aa). Position 409 is a phosphoserine (Ser409). Thr415 and Thr433 each carry phosphothreonine. 4 positions are modified to phosphoserine: Ser436, Ser441, Ser449, and Ser451.

This sequence belongs to the GORASP family. As to quaternary structure, homodimer. Homooligomer. ER stress induces phosphorylation-dependent monomerization. Interacts with BLZF1/Golgin 45. Identified in a complex with RAB2 and GORASP2. Interacts with JAM2 and JAM3. Interacts with members of the p24 cargo receptors. Interacts with CNIH1 and the cytoplasmic domain of transmembrane TGFA, prior its transit in the trans-Golgi. Interacts with KCTD5. Interacts with TMED2 and TMED3. Interacts with SEC16A in response to ER stress. Interacts (via PDZ GRASP-type 1 domain) with core-glycosylated CFTR in response to ER stress. Myristoylated. Myristoylation is essential for the Golgi targeting. Post-translationally, palmitoylated. In terms of processing, phosphorylated in mitotic cells. ER stress-induced phosphorylation at Ser-441 induces monomerization and subsequent relocalization from Golgi to ER which is essential for mediating unconventional (ER/Golgi-independent) trafficking of CFTR to the cell membrane.

The protein resides in the golgi apparatus membrane. It is found in the endoplasmic reticulum membrane. Its subcellular location is the golgi apparatus. Its function is as follows. Key structural protein of the Golgi apparatus. The membrane cisternae of the Golgi apparatus adhere to each other to form stacks, which are aligned side by side to form the Golgi ribbon. Acting in concert with GORASP1/GRASP65, is required for the formation and maintenance of the Golgi ribbon, and may be dispensable for the formation of stacks. However, other studies suggest that GORASP2 plays a role in the assembly and membrane stacking of the Golgi cisternae, and in the process by which Golgi stacks reform after breakdown during mitosis and meiosis. May regulate the intracellular transport and presentation of a defined set of transmembrane proteins, such as transmembrane TGFA. Required for normal acrosome formation during spermiogenesis and normal male fertility, probably by promoting colocalization of JAM2 and JAM3 at contact sites between germ cells and Sertoli cells. Mediates ER stress-induced unconventional (ER/Golgi-independent) trafficking of core-glycosylated CFTR to cell membrane. In Homo sapiens (Human), this protein is Golgi reassembly-stacking protein 2 (GORASP2).